A 675-amino-acid polypeptide reads, in one-letter code: Zinc finger protein 526 (675 aa).

C2H2-type zinc fingers lie at residues phenylalanine 56–histidine 78, phenylalanine 108–histidine 130, and tyrosine 140–histidine 163. The tract at residues lysine 160 to valine 195 is disordered. Positions proline 171–glutamate 194 are enriched in pro residues. The C2H2-type 4 zinc finger occupies tyrosine 200 to histidine 222. The segment covering serine 225–leucine 234 has biased composition (basic and acidic residues). Residues serine 225–glycine 283 form a disordered region. Over residues glutamate 235 to serine 261 the composition is skewed to acidic residues. Polar residues predominate over residues threonine 269–serine 281. 4 consecutive C2H2-type zinc fingers follow at residues phenylalanine 312–histidine 334, histidine 339–histidine 361, tyrosine 367–histidine 389, and histidine 395–histidine 416. Residues threonine 415–proline 439 form a disordered region. A compositionally biased stretch (polar residues) spans glycine 418–alanine 427. 5 consecutive C2H2-type zinc fingers follow at residues leucine 447–histidine 470, histidine 477–histidine 499, phenylalanine 505–histidine 527, tyrosine 533–histidine 555, and tyrosine 578–histidine 600. A disordered region spans residues leucine 606–glutamine 625. A compositionally biased stretch (pro residues) spans proline 611–proline 624.

Belongs to the krueppel C2H2-type zinc-finger protein family.

It is found in the nucleus. Its function is as follows. May be involved in transcriptional regulation. This Mus musculus (Mouse) protein is Zinc finger protein 526 (Znf526).